A 130-amino-acid polypeptide reads, in one-letter code: MSELRSELKYLESHEWARVEEDGTVTIGITDHAQEALGDVVFVEVPEVGSQVSIGEEAGVVESVKAASDIYSPVSGEVIAVNEALEDAPETVNSSPYDDGWFFKVKPDDLDELEKALSMEDYKAAIESDD.

Positions 24-106 (TVTIGITDHA…YDDGWFFKVK (83 aa)) constitute a Lipoyl-binding domain. Lys65 carries the post-translational modification N6-lipoyllysine.

This sequence belongs to the GcvH family. The glycine cleavage system is composed of four proteins: P, T, L and H. The cofactor is (R)-lipoate.

Its function is as follows. The glycine cleavage system catalyzes the degradation of glycine. The H protein shuttles the methylamine group of glycine from the P protein to the T protein. The protein is Glycine cleavage system H protein of Saccharophagus degradans (strain 2-40 / ATCC 43961 / DSM 17024).